We begin with the raw amino-acid sequence, 426 residues long: 4-hydroxy-3-methylbut-2-en-1-yl diphosphate synthase (flavodoxin) (426 aa).

Residues Met1–Arg20 are disordered. 4 residues coordinate [4Fe-4S] cluster: Cys320, Cys323, Cys366, and Glu373.

This sequence belongs to the IspG family. [4Fe-4S] cluster serves as cofactor.

It carries out the reaction (2E)-4-hydroxy-3-methylbut-2-enyl diphosphate + oxidized [flavodoxin] + H2O + 2 H(+) = 2-C-methyl-D-erythritol 2,4-cyclic diphosphate + reduced [flavodoxin]. Its pathway is isoprenoid biosynthesis; isopentenyl diphosphate biosynthesis via DXP pathway; isopentenyl diphosphate from 1-deoxy-D-xylulose 5-phosphate: step 5/6. Converts 2C-methyl-D-erythritol 2,4-cyclodiphosphate (ME-2,4cPP) into 1-hydroxy-2-methyl-2-(E)-butenyl 4-diphosphate. The protein is 4-hydroxy-3-methylbut-2-en-1-yl diphosphate synthase (flavodoxin) of Wolbachia pipientis subsp. Culex pipiens (strain wPip).